The primary structure comprises 259 residues: Methyltransferase sdnD (259 aa).

Belongs to the FkbM methyltransferase family.

The protein operates within antibiotic biosynthesis. Its function is as follows. Methyltransferase; part of the gene cluster that mediates the biosynthesis of sordarin and hypoxysordarin, glycoside antibiotics with a unique tetracyclic diterpene aglycone structure. First, the geranylgeranyl diphosphate synthase sdnC constructs GGDP from farnesyl diphosphate and isopentenyl diphosphate. The diterpene cyclase sdnA then catalyzes the cyclization of GGDP to afford cycloaraneosene. Cycloaraneosene is then hydroxylated four times by the putative cytochrome P450 monooxygenases sdnB, sdnE, sdnF and sdnH to give a hydroxylated cycloaraneosene derivative such as cycloaraneosene-8,9,13,19-tetraol. Although the order of the hydroxylations is unclear, at least C8, C9 and C13 of the cycloaraneosene skeleton are hydroxylated before the sordaricin formation. Dehydration of the 13-hydroxy group of the hydroxylated cycloaraneosene derivative might be catalyzed by an unassigned hypothetical protein such as sdnG and sdnP to construct the cyclopentadiene moiety. The FAD-dependent oxidoreductase sdnN is proposed to catalyze the oxidation at C9 of the hydroxylated cycloaraneosene derivative and also catalyze the Baeyer-Villiger oxidation to give the lactone intermediate. The presumed lactone intermediate would be hydrolyzed to give an acrolein moiety and a carboxylate moiety. Then, [4+2]cycloaddition would occur between the acrolein moiety and the cyclopentadiene moiety to give sordaricin. SdnN might also be involved in the [4+2]cycloaddition after the hypothesized oxidation to accommodate the oxidized product and prompt the [4+2]cycloaddition. GDP-6-deoxy-D-altrose may be biosynthesized from GDP-D-mannose by the putative GDP-mannose-4,6-dehydratase sdnI and the short-chain dehydrogenase sdnK. The glycosyltransferase sdnJ catalyzes the attachment of 6-deoxy-D-altrose onto the 19-hydroxy group of sordaricin to give 4'-O-demethylsordarin. The methyltransferase sdnD would complete the biosynthesis of sordarin. Sordarin can be further modified into hypoxysordarin. The unique acyl chain at the 3'-hydroxy group of hypoxysordarin would be constructed by an iterative type I PKS sdnO and the trans-acting polyketide methyltransferase sdnL. SdnL would be responsible for the introduction of an alpha-methyl group of the polyketide chain. Alternatively, the beta-lactamase-like protein sdnR might be responsible for the cleavage and transfer of the polyketide chain from the PKS sdnO to sordarin. Two putative cytochrome P450 monooxygenases, sdnQ and sdnT, might catalyze the epoxidations of the polyketide chain to complete the biosynthesis of hypoxysordarin. Transcriptional regulators sdnM and sdnS are presumably encoded for the transcriptional regulation of the expression of the sdn gene cluster. In Sordaria araneosa (Pleurage araneosa), this protein is Methyltransferase sdnD.